Here is a 446-residue protein sequence, read N- to C-terminus: Nitrate/nitrite binding protein NrtA (446 aa).

The first 28 residues, 1–28, serve as a signal peptide directing secretion; it reads MSNFSRSTRRKFMFTAGAAAIGGVVLHG. A lipid anchor (N-palmitoyl cysteine) is attached at Cys29. The S-diacylglycerol cysteine moiety is linked to residue Cys29. Nitrate contacts are provided by Trp102, Gln155, His196, Gly240, and Lys269.

It belongs to the CmpA/NrtA family. In terms of assembly, the complex is composed of two ATP-binding proteins (NrtC and NrtD), two transmembrane proteins (NrtB) and a solute-binding protein (NrtA).

It is found in the cell inner membrane. Functionally, part of the ABC transporter complex NrtABCD involved in nitrate uptake. The complex is probably also involved in nitrite transport. NrtA is the substrate-binding protein. Binds nitrate. The protein is Nitrate/nitrite binding protein NrtA of Synechocystis sp. (strain ATCC 27184 / PCC 6803 / Kazusa).